A 430-amino-acid chain; its full sequence is Mitochondrial distribution and morphology protein 12 (430 aa).

The SMP-LTD domain maps to 1 to 430 (MSIDIDWERA…VYPSFWTFLI (430 aa)). Disordered stretches follow at residues 61 to 117 (DLSD…YESN), 177 to 276 (TPLG…RMRE), and 352 to 377 (MGPETAGGGGGGDTSEPNSSRRKPSS). A compositionally biased stretch (acidic residues) spans 69-82 (FYEDDDENFSDSSE). Over residues 85–96 (SPTREPVDRYGN) the composition is skewed to basic and acidic residues. 2 stretches are compositionally biased toward polar residues: residues 211-233 (SAQSRPSTANTGNTLPSRDSMSI) and 241-251 (ASQGMPNNQGQ). Residues 265-276 (PLDDTPPRRMRE) show a composition bias toward basic and acidic residues.

The protein belongs to the MDM12 family. Component of the ER-mitochondria encounter structure (ERMES) or MDM complex, composed of MMM1, MDM10, MDM12 and MDM34. An MMM1 homodimer associates with one molecule of MDM12 on each side in a pairwise head-to-tail manner, and the SMP-LTD domains of MMM1 and MDM12 generate a continuous hydrophobic tunnel for phospholipid trafficking.

The protein resides in the mitochondrion outer membrane. Its subcellular location is the endoplasmic reticulum membrane. Its function is as follows. Component of the ERMES/MDM complex, which serves as a molecular tether to connect the endoplasmic reticulum (ER) and mitochondria. Components of this complex are involved in the control of mitochondrial shape and protein biogenesis, and function in nonvesicular lipid trafficking between the ER and mitochondria. MDM12 is required for the interaction of the ER-resident membrane protein MMM1 and the outer mitochondrial membrane-resident beta-barrel protein MDM10. The MDM12-MMM1 subcomplex functions in the major beta-barrel assembly pathway that is responsible for biogenesis of all mitochondrial outer membrane beta-barrel proteins, and acts in a late step after the SAM complex. The MDM10-MDM12-MMM1 subcomplex further acts in the TOM40-specific pathway after the action of the MDM12-MMM1 complex. Essential for establishing and maintaining the structure of mitochondria and maintenance of mtDNA nucleoids. In Ajellomyces capsulatus (strain G186AR / H82 / ATCC MYA-2454 / RMSCC 2432) (Darling's disease fungus), this protein is Mitochondrial distribution and morphology protein 12.